The sequence spans 83 residues: MCWKPKVKVPKMDTNQIRAAEPAPLTEPPKSVVWGGDDDEDTSVSSSEVPTTPSSGKSSLKVKLDDSAAKNKSKSSIRSKAFG.

The interval 1 to 83 (MCWKPKVKVP…KSSIRSKAFG (83 aa)) is disordered. Low complexity predominate over residues 43 to 55 (SVSSSEVPTTPSS).

This is an uncharacterized protein from Enterobacteria phage T3 (Bacteriophage T3).